The chain runs to 497 residues: Acetyltransferase adrJ (497 aa).

Active-site proton acceptor residues include His-174 and Asp-422. Residues 430–451 form a disordered region; that stretch reads SSAQSSSQNTQKKGKPSYVNGV.

This sequence belongs to the plant acyltransferase family. In terms of assembly, monomer.

It functions in the pathway secondary metabolite biosynthesis; terpenoid biosynthesis. Acetyltransferase; part of the gene cluster that mediates the biosynthesis of andrastins, meroterpenoid compounds that exhibit inhibitory activity against ras farnesyltransferase, suggesting that they could be promising leads for antitumor agents. The first step of the pathway is the synthesis of 3,5-dimethylorsellinic acid (DMOA) by the polyketide synthase adrD via condensation of one acetyl-CoA starter unit with 3 malonyl-CoA units and 2 methylations. DMAO is then converted to farnesyl-DMAO by the prenyltransferase adrG. The methyltransferase adrK catalyzes the methylation of the carboxyl group of farnesyl-DMAO to farnesyl-DMAO methyl ester which is further converted to epoxyfarnesyl-DMAO methyl ester by the FAD-dependent monooxygenase adrH. The terpene cyclase adrI then catalyzes the carbon skeletal rearrangement to generate the andrastin E, the first compound in the pathway having the andrastin scaffold, with the tetracyclic ring system. The post-cyclization tailoring enzymes adrF, adrE, adrJ, and adrA, are involved in the conversion of andrastin E into andrastin A. The short chain dehydrogenase adrF is responsible for the oxidation of the C-3 a hydroxyl group of andrastin E to yield the corresponding ketone, andrastin D. The ketoreductase adrE stereoselectively reduces the carbonyl moiety to reverse the stereochemistry of the C-3 position to yield andrastin F. The acetyltransferase adrJ is the acetyltransferase that attaches the acetyl group to the C-3 hydroxyl group of andrastin F to yield andrastin C. Finally, the cytochrome P450 monooxygenase adrA catalyzes two sequential oxidation reactions of the C-23 methyl group, to generate the corresponding alcohol andrastin B, and aldehyde andrastin A. The sequence is that of Acetyltransferase adrJ from Penicillium rubens (strain ATCC 28089 / DSM 1075 / NRRL 1951 / Wisconsin 54-1255) (Penicillium chrysogenum).